An 861-amino-acid polypeptide reads, in one-letter code: Envelope glycoprotein gp160 (861 aa).

The signal sequence occupies residues 1–32 (MRVKEKYQHLWRWGWKWGTMLLGILMICSATE). Over 33 to 689 (KLWVTVYYGV…ITNWLWYIKI (657 aa)) the chain is Extracellular. Residues cysteine 54 and cysteine 74 are joined by a disulfide bond. Residues asparagine 88, asparagine 136, asparagine 141, asparagine 146, asparagine 161, and asparagine 165 are each glycosylated (N-linked (GlcNAc...) asparagine; by host). Disulfide bonds link cysteine 119–cysteine 210, cysteine 126–cysteine 201, cysteine 131–cysteine 162, cysteine 223–cysteine 252, and cysteine 233–cysteine 244. Residues 131-161 (CTDLGNATNTNSSNTNSSSGEMMMEKGEIKN) form a V1 region. The tract at residues 162-201 (CSFNISTSIRGKVQKEYAFFYKLDIIPIDNDTTSYTLTSC) is V2. Positions 184–186 (LDI) match the Putative binding site to alpha-4/beta-7 integrin motif. N-linked (GlcNAc...) asparagine; by host glycans are attached at residues asparagine 191, asparagine 202, asparagine 235, asparagine 239, asparagine 246, asparagine 267, asparagine 281, asparagine 294, asparagine 300, asparagine 306, asparagine 337, asparagine 344, and asparagine 361. Residues 301-335 (CTRPNNNTRKSIRIQRGPGRAFVTIGKIGNMRQAH) are V3. Cysteine 301 and cysteine 336 form a disulfide bridge. The segment at 369-379 (SSGGDPEIVTH) is CD4-binding loop. 2 disulfide bridges follow: cysteine 383–cysteine 450 and cysteine 390–cysteine 423. Positions 390 to 423 (CNSTQLFNSTWFNSTWSTEGSNNTEGSDTITLPC) are V4. N-linked (GlcNAc...) asparagine; by host glycosylation is found at asparagine 391, asparagine 397, asparagine 402, asparagine 411, asparagine 453, and asparagine 468. 2 V5 regions span residues 466–476 (NNNGSEIFRPG) and 468–476 (NGSEIFRPG). The fusion peptide stretch occupies residues 517–537 (AVGIGALFLGFLGAAGSTMGA). An immunosuppression region spans residues 579 to 597 (KQLQARILAVERYLKDQQL). A disulfide bridge links cysteine 603 with cysteine 609. Asparagine 616, asparagine 621, asparagine 630, asparagine 642, and asparagine 679 each carry an N-linked (GlcNAc...) asparagine; by host glycan. Positions 638 to 672 (REINNYTSLIHSLIEESQNQQEKNEQELLELDKWA) form a coiled coil. The segment at 667–688 (ELDKWASLWNWFNITNWLWYIK) is MPER; binding to GalCer. Residues 690–710 (FIMIVGGLVGLRIVFAVLSIV) traverse the membrane as a helical segment. Residues 711 to 861 (NRVRQGYSPL…IRQGLERILL (151 aa)) lie on the Cytoplasmic side of the membrane. Positions 717–720 (YSPL) match the YXXL motif; contains endocytosis signal motif. Residues 723–747 (QTHLPTPRGPDRPEGIEEEGGERDR) form a disordered region. Residues cysteine 769 and cysteine 842 are each lipidated (S-palmitoyl cysteine; by host). A Di-leucine internalization motif motif is present at residues 860-861 (LL).

The protein belongs to the HIV-1 env protein family. The mature envelope protein (Env) consists of a homotrimer of non-covalently associated gp120-gp41 heterodimers. The resulting complex protrudes from the virus surface as a spike. There seems to be as few as 10 spikes on the average virion. Interacts with host CD4, CCR5 and CXCR4. Gp120 also interacts with the C-type lectins CD209/DC-SIGN and CLEC4M/DC-SIGNR (collectively referred to as DC-SIGN(R)). Gp120 and gp41 interact with GalCer. Gp120 interacts with host ITGA4/ITGB7 complex; on CD4+ T-cells, this interaction results in rapid activation of integrin ITGAL/LFA-1, which facilitates efficient cell-to-cell spreading of HIV-1. Gp120 interacts with cell-associated heparan sulfate; this interaction increases virus infectivity on permissive cells and may be involved in infection of CD4- cells. As to quaternary structure, the mature envelope protein (Env) consists of a homotrimer of non-covalently associated gp120-gp41 heterodimers. The resulting complex protrudes from the virus surface as a spike. There seems to be as few as 10 spikes on the average virion. In terms of processing, highly glycosylated by host. The high number of glycan on the protein is reffered to as 'glycan shield' because it contributes to hide protein sequence from adaptive immune system. Post-translationally, palmitoylation of the transmembrane protein and of Env polyprotein (prior to its proteolytic cleavage) is essential for their association with host cell membrane lipid rafts. Palmitoylation is therefore required for envelope trafficking to classical lipid rafts, but not for viral replication. Specific enzymatic cleavages in vivo yield mature proteins. Envelope glycoproteins are synthesized as an inactive precursor that is heavily N-glycosylated and processed likely by host cell furin in the Golgi to yield the mature SU and TM proteins. The cleavage site between SU and TM requires the minimal sequence [KR]-X-[KR]-R. About 2 of the 9 disulfide bonds of gp41 are reduced by P4HB/PDI, following binding to CD4 receptor.

The protein localises to the virion membrane. Its subcellular location is the host cell membrane. It is found in the host endosome membrane. Its function is as follows. Oligomerizes in the host endoplasmic reticulum into predominantly trimers. In a second time, gp160 transits in the host Golgi, where glycosylation is completed. The precursor is then proteolytically cleaved in the trans-Golgi and thereby activated by cellular furin or furin-like proteases to produce gp120 and gp41. Attaches the virus to the host lymphoid cell by binding to the primary receptor CD4. This interaction induces a structural rearrangement creating a high affinity binding site for a chemokine coreceptor like CXCR4 and/or CCR5. Acts as a ligand for CD209/DC-SIGN and CLEC4M/DC-SIGNR, which are respectively found on dendritic cells (DCs), and on endothelial cells of liver sinusoids and lymph node sinuses. These interactions allow capture of viral particles at mucosal surfaces by these cells and subsequent transmission to permissive cells. HIV subverts the migration properties of dendritic cells to gain access to CD4+ T-cells in lymph nodes. Virus transmission to permissive T-cells occurs either in trans (without DCs infection, through viral capture and transmission), or in cis (following DCs productive infection, through the usual CD4-gp120 interaction), thereby inducing a robust infection. In trans infection, bound virions remain infectious over days and it is proposed that they are not degraded, but protected in non-lysosomal acidic organelles within the DCs close to the cell membrane thus contributing to the viral infectious potential during DCs' migration from the periphery to the lymphoid tissues. On arrival at lymphoid tissues, intact virions recycle back to DCs' cell surface allowing virus transmission to CD4+ T-cells. In terms of biological role, acts as a class I viral fusion protein. Under the current model, the protein has at least 3 conformational states: pre-fusion native state, pre-hairpin intermediate state, and post-fusion hairpin state. During fusion of viral and target intracellular membranes, the coiled coil regions (heptad repeats) assume a trimer-of-hairpins structure, positioning the fusion peptide in close proximity to the C-terminal region of the ectodomain. The formation of this structure appears to drive apposition and subsequent fusion of viral and target cell membranes. Complete fusion occurs in host cell endosomes and is dynamin-dependent, however some lipid transfer might occur at the plasma membrane. The virus undergoes clathrin-dependent internalization long before endosomal fusion, thus minimizing the surface exposure of conserved viral epitopes during fusion and reducing the efficacy of inhibitors targeting these epitopes. Membranes fusion leads to delivery of the nucleocapsid into the cytoplasm. The protein is Envelope glycoprotein gp160 of Homo sapiens (Human).